A 422-amino-acid chain; its full sequence is N-acylglucosamine 2-epimerase (422 aa).

The leucine-zipper stretch occupies residues 185-206 (LLNLVEQLGEADEELAGISAEL).

This sequence belongs to the N-acylglucosamine 2-epimerase family. In terms of assembly, homodimer. Forms a heterodimer with renin and inhibits its activity.

The enzyme catalyses an N-acyl-D-glucosamine = an N-acyl-D-mannosamine. It participates in amino-sugar metabolism; N-acetylneuraminate degradation. In terms of biological role, catalyzes the interconversion of N-acetylglucosamine to N-acetylmannosamine. Involved in the N-glycolylneuraminic acid (Neu5Gc) degradation pathway. This is N-acylglucosamine 2-epimerase (RENBP) from Bos taurus (Bovine).